Consider the following 354-residue polypeptide: Ornithine transcarbamylase, mitochondrial (354 aa).

A mitochondrion-targeting transit peptide spans 1–32 (MLFNLKNLYRITKLTQNSKHLPRHFCRGPPNQ). Residues 90-94 (STRTR), arginine 141, and histidine 168 each bind carbamoyl phosphate. Arginine 141 is an L-ornithine binding site. Residues asparagine 199, 263 to 267 (DTWIS), 302 to 305 (HCLP), and arginine 330 contribute to the L-ornithine site. Cysteine 303 is an active-site residue. Arginine 330 lines the carbamoyl phosphate pocket.

The protein belongs to the aspartate/ornithine carbamoyltransferase superfamily. OTCase family. In terms of assembly, homotrimer. Cleavage of the precursor form to the active form occurs only in the kidney. As to expression, expressed in kidney, brain, heart, liver, pancreas, gizzard, small intestine and breast muscle. More abundant in mitochondrion-rich organs (heart, liver and brain) than in other organs. Activity is only detected in the kidney.

It is found in the mitochondrion matrix. It carries out the reaction carbamoyl phosphate + L-ornithine = L-citrulline + phosphate + H(+). Its pathway is nitrogen metabolism; urea cycle; L-citrulline from L-ornithine and carbamoyl phosphate: step 1/1. With respect to regulation, inhibition by ornithine increases at higher pH. Functionally, catalyzes the second step of the urea cycle, the condensation of carbamoyl phosphate with L-ornithine to form L-citrulline. The urea cycle ensures the detoxification of ammonia by converting it to urea for excretion. The chain is Ornithine transcarbamylase, mitochondrial from Gallus gallus (Chicken).